The primary structure comprises 536 residues: CTP synthase (536 aa).

An amidoligase domain region spans residues 1–268 (MSFKSIFLTG…VDFLLSKFGF (268 aa)). Position 14 (Ser14) interacts with CTP. Ser14 is a binding site for UTP. 15-20 (SLGKGL) provides a ligand contact to ATP. Residue Tyr55 coordinates L-glutamine. Asp72 provides a ligand contact to ATP. 2 residues coordinate Mg(2+): Asp72 and Glu142. Residues 149 to 151 (DIE), 188 to 193 (KTKPTQ), and Lys224 each bind CTP. Residues 188-193 (KTKPTQ) and Lys224 contribute to the UTP site. Residues 294 to 532 (RIGLVGKYLE…LSAALDYSLE (239 aa)) enclose the Glutamine amidotransferase type-1 domain. Gly353 serves as a coordination point for L-glutamine. The active-site Nucleophile; for glutamine hydrolysis is Cys380. Residues 381-384 (LGMQ), Glu404, and Arg460 contribute to the L-glutamine site. Catalysis depends on residues His505 and Glu507.

Belongs to the CTP synthase family. Homotetramer.

It carries out the reaction UTP + L-glutamine + ATP + H2O = CTP + L-glutamate + ADP + phosphate + 2 H(+). The enzyme catalyses L-glutamine + H2O = L-glutamate + NH4(+). It catalyses the reaction UTP + NH4(+) + ATP = CTP + ADP + phosphate + 2 H(+). It functions in the pathway pyrimidine metabolism; CTP biosynthesis via de novo pathway; CTP from UDP: step 2/2. Allosterically activated by GTP, when glutamine is the substrate; GTP has no effect on the reaction when ammonia is the substrate. The allosteric effector GTP functions by stabilizing the protein conformation that binds the tetrahedral intermediate(s) formed during glutamine hydrolysis. Inhibited by the product CTP, via allosteric rather than competitive inhibition. Catalyzes the ATP-dependent amination of UTP to CTP with either L-glutamine or ammonia as the source of nitrogen. Regulates intracellular CTP levels through interactions with the four ribonucleotide triphosphates. The chain is CTP synthase from Chlamydia muridarum (strain MoPn / Nigg).